Here is a 442-residue protein sequence, read N- to C-terminus: Glutamyl-tRNA reductase (442 aa).

Substrate-binding positions include 49–52 (TCNR), serine 109, 114–116 (EGQ), and glutamine 120. Cysteine 50 acts as the Nucleophile in catalysis. Residue 198–203 (GAGRMA) participates in NADP(+) binding. The segment at 420–442 (MAAAQRLFDLPGDDADRDRSDAK) is disordered. Residues 433–442 (DADRDRSDAK) are compositionally biased toward basic and acidic residues.

The protein belongs to the glutamyl-tRNA reductase family. As to quaternary structure, homodimer.

It carries out the reaction (S)-4-amino-5-oxopentanoate + tRNA(Glu) + NADP(+) = L-glutamyl-tRNA(Glu) + NADPH + H(+). The protein operates within porphyrin-containing compound metabolism; protoporphyrin-IX biosynthesis; 5-aminolevulinate from L-glutamyl-tRNA(Glu): step 1/2. Its pathway is porphyrin-containing compound metabolism; chlorophyll biosynthesis. In terms of biological role, catalyzes the NADPH-dependent reduction of glutamyl-tRNA(Glu) to glutamate 1-semialdehyde (GSA). In Synechococcus sp. (strain RCC307), this protein is Glutamyl-tRNA reductase.